A 295-amino-acid polypeptide reads, in one-letter code: MSVKHFIQITKPGIIFGNVLSVAGGFFLASKGHVDFALFLAVVIGTSLVVASGCVFNNCIDRDIDIKMERTKNRVMVQGGMSLTLALVYATLLGVAGFSLLYVQANPLSAFCALIGFIVYVGFYSLWLKRKSVHGTLVGSLSGAMPPVIGYCAVSNSFDLAAVTLLVMFSLWQMPHSFAIAIFRFKDYSAANIPVLPVARGILAAKKQIVLYVLAFVLATLMLTLGGYAGLGYLAVAAAMGLYWLYMAWGGYKAEDDSKWARKVFGFSILTVTALSVMMGVDSQTAADVLMTYAR.

9 helical membrane passes run 9-29 (ITKPGIIFGNVLSVAGGFFLA), 36-56 (FALFLAVVIGTSLVVASGCVF), 83-103 (LTLALVYATLLGVAGFSLLYV), 108-128 (LSAFCALIGFIVYVGFYSLWL), 135-155 (GTLVGSLSGAMPPVIGYCAVS), 163-183 (VTLLVMFSLWQMPHSFAIAIF), 209-229 (IVLYVLAFVLATLMLTLGGYA), 230-250 (GLGYLAVAAAMGLYWLYMAWG), and 264-284 (VFGFSILTVTALSVMMGVDSQ).

The protein belongs to the UbiA prenyltransferase family. Protoheme IX farnesyltransferase subfamily.

It is found in the cell inner membrane. It catalyses the reaction heme b + (2E,6E)-farnesyl diphosphate + H2O = Fe(II)-heme o + diphosphate. It participates in porphyrin-containing compound metabolism; heme O biosynthesis; heme O from protoheme: step 1/1. Its function is as follows. Converts heme B (protoheme IX) to heme O by substitution of the vinyl group on carbon 2 of heme B porphyrin ring with a hydroxyethyl farnesyl side group. This chain is Protoheme IX farnesyltransferase 2, found in Pseudomonas putida (strain W619).